A 395-amino-acid chain; its full sequence is RNA pseudouridine synthase 7 (395 aa).

Residues 1 to 21 (MKRKQQEDDNDDGVEKAVSPV) form a disordered region. Residues 74 to 136 (KTIVDLFADE…HEPPVMIDDV (63 aa)) enclose the S4 RNA-binding domain. The active site involves aspartate 187. Residues 244 to 255 (EGRSTAEDANSS) are compositionally biased toward polar residues. The interval 244–263 (EGRSTAEDANSSGDDKKVKG) is disordered.

It belongs to the pseudouridine synthase RluA family.

It catalyses the reaction a uridine in RNA = a pseudouridine in RNA. The sequence is that of RNA pseudouridine synthase 7 from Arabidopsis thaliana (Mouse-ear cress).